We begin with the raw amino-acid sequence, 65 residues long: Large ribosomal subunit protein bL35c (65 aa).

It belongs to the bacterial ribosomal protein bL35 family.

It localises to the plastid. Its subcellular location is the cyanelle. This chain is Large ribosomal subunit protein bL35c (rpl35), found in Cyanophora paradoxa.